We begin with the raw amino-acid sequence, 205 residues long: Proteasome subunit beta type-3 (205 aa).

This sequence belongs to the peptidase T1B family. As to quaternary structure, the 26S proteasome consists of a 20S proteasome core and two 19S regulatory subunits. The 20S proteasome core is composed of 28 subunits that are arranged in four stacked rings, resulting in a barrel-shaped structure. The two end rings are each formed by seven alpha subunits, and the two central rings are each formed by seven beta subunits. The catalytic chamber with the active sites is on the inside of the barrel.

Its subcellular location is the cytoplasm. The protein resides in the nucleus. Non-catalytic component of the proteasome, a multicatalytic proteinase complex which is characterized by its ability to cleave peptides with Arg, Phe, Tyr, Leu, and Glu adjacent to the leaving group at neutral or slightly basic pH. The proteasome has an ATP-dependent proteolytic activity. The chain is Proteasome subunit beta type-3 from Drosophila melanogaster (Fruit fly).